Reading from the N-terminus, the 171-residue chain is 3-hydroxydecanoyl-[acyl-carrier-protein] dehydratase (171 aa).

Histidine 70 is a catalytic residue.

The protein belongs to the thioester dehydratase family. FabA subfamily. Homodimer.

The protein resides in the cytoplasm. The enzyme catalyses a (3R)-hydroxyacyl-[ACP] = a (2E)-enoyl-[ACP] + H2O. The catalysed reaction is (3R)-hydroxydecanoyl-[ACP] = (2E)-decenoyl-[ACP] + H2O. It catalyses the reaction (2E)-decenoyl-[ACP] = (3Z)-decenoyl-[ACP]. It functions in the pathway lipid metabolism; fatty acid biosynthesis. Necessary for the introduction of cis unsaturation into fatty acids. Catalyzes the dehydration of (3R)-3-hydroxydecanoyl-ACP to E-(2)-decenoyl-ACP and then its isomerization to Z-(3)-decenoyl-ACP. Can catalyze the dehydratase reaction for beta-hydroxyacyl-ACPs with saturated chain lengths up to 16:0, being most active on intermediate chain length. This Ectopseudomonas mendocina (strain ymp) (Pseudomonas mendocina) protein is 3-hydroxydecanoyl-[acyl-carrier-protein] dehydratase.